A 230-amino-acid chain; its full sequence is ATP synthase subunit a (230 aa).

A run of 5 helical transmembrane segments spans residues 17–37 (LPITQSVLTTWFIMISLFIMA), 78–98 (IFPFVATLWIFILVSNLIGVI), 107–127 (DLSVTASLAIMTFLSVHWFGI), 165–187 (LFGNIMSLQLTALIVLMIAGFLV), and 198–218 (EAIIQAYIFGMLALIYIAGGI).

This sequence belongs to the ATPase A chain family. F-type ATPases have 2 components, CF(1) - the catalytic core - and CF(0) - the membrane proton channel. CF(1) has five subunits: alpha(3), beta(3), gamma(1), delta(1), epsilon(1). CF(0) has three main subunits: a(1), b(2) and c(9-12). The alpha and beta chains form an alternating ring which encloses part of the gamma chain. CF(1) is attached to CF(0) by a central stalk formed by the gamma and epsilon chains, while a peripheral stalk is formed by the delta and b chains.

Its subcellular location is the cell inner membrane. In terms of biological role, key component of the proton channel; it plays a direct role in the translocation of protons across the membrane. The sequence is that of ATP synthase subunit a from Legionella pneumophila subsp. pneumophila (strain Philadelphia 1 / ATCC 33152 / DSM 7513).